Reading from the N-terminus, the 206-residue chain is Large ribosomal subunit protein uL4 (206 aa).

The tract at residues 47 to 94 is disordered; sequence NRAQKGRSEIAKSTRKPFRQKGTGNARAGMASSPLWRGGGKIFPNSPD.

The protein belongs to the universal ribosomal protein uL4 family. Part of the 50S ribosomal subunit.

In terms of biological role, one of the primary rRNA binding proteins, this protein initially binds near the 5'-end of the 23S rRNA. It is important during the early stages of 50S assembly. It makes multiple contacts with different domains of the 23S rRNA in the assembled 50S subunit and ribosome. Functionally, forms part of the polypeptide exit tunnel. The sequence is that of Large ribosomal subunit protein uL4 from Azoarcus sp. (strain BH72).